A 403-amino-acid chain; its full sequence is Ribosomal RNA large subunit methyltransferase I (403 aa).

The 80-residue stretch at 9–88 (YPRLVLSKGR…ESIDIAFFTR (80 aa)) folds into the PUA domain.

Belongs to the methyltransferase superfamily. RlmI family.

The protein localises to the cytoplasm. The enzyme catalyses cytidine(1962) in 23S rRNA + S-adenosyl-L-methionine = 5-methylcytidine(1962) in 23S rRNA + S-adenosyl-L-homocysteine + H(+). In terms of biological role, specifically methylates the cytosine at position 1962 (m5C1962) of 23S rRNA. This Salmonella schwarzengrund (strain CVM19633) protein is Ribosomal RNA large subunit methyltransferase I.